The sequence spans 346 residues: Low specificity L-threonine aldolase (346 aa).

N6-(pyridoxal phosphate)lysine is present on lysine 207.

It belongs to the threonine aldolase family. Homotetramer. Pyridoxal 5'-phosphate is required as a cofactor.

The catalysed reaction is L-threonine = acetaldehyde + glycine. It catalyses the reaction L-allo-threonine = acetaldehyde + glycine. Catalyzes the cleavage of L-allo-threonine and L-threonine to glycine and acetaldehyde. Can also act on L-erythro-phenylserine, L-threo-phenylserine, L-beta-3,4-methylenedioxyphenylserine and L-beta-3,4-dihydroxyphenylserine. This Pseudomonas sp. (strain NCIMB 10558) protein is Low specificity L-threonine aldolase (ltaE).